A 298-amino-acid chain; its full sequence is ATP-dependent Clp protease proteolytic subunit 5, chloroplastic (298 aa).

The transit peptide at 1–100 (MAHACVSTSA…SSPYFPAYAQ (100 aa)) directs the protein to the chloroplast. N-acetylglycine is present on Gly-101. The active-site Nucleophile is the Ser-193. His-218 is an active-site residue.

Belongs to the peptidase S14 family. As to quaternary structure, component of the chloroplastic Clp protease core complex which consist of at least 16 proteins: CLPP4 (3 copies), CLPP5 (3 copies), CLPR4 (2 copies), ClpP1 (1 copy), CLPP6 (1 copy), CLPR2 (1 copy), CLPT1 (1 copy), CLPT2 (1 copy) and 3 copies of CLPP3 and/or CLPR1 and/or CLPR3. The core complex is organized in two heptameric rings, one containing CLPP3,4,5,6 in a 1:2:3:1 ratio and the other CLPP1 and CLPR1,2,3,4 in a 3:1:1:1:1 ratio. Interacts with CHIP. In terms of processing, ubiquitinated in vitro by CHIP. Mostly expressed in leaves. Also detected in stems, and to a lower extent, in roots (at protein level).

It is found in the plastid. The protein resides in the chloroplast stroma. It carries out the reaction Hydrolysis of proteins to small peptides in the presence of ATP and magnesium. alpha-casein is the usual test substrate. In the absence of ATP, only oligopeptides shorter than five residues are hydrolyzed (such as succinyl-Leu-Tyr-|-NHMec, and Leu-Tyr-Leu-|-Tyr-Trp, in which cleavage of the -Tyr-|-Leu- and -Tyr-|-Trp bonds also occurs).. In terms of biological role, cleaves peptides in various proteins in a process that requires ATP hydrolysis. Has a chymotrypsin-like activity. Plays a major role in the degradation of misfolded proteins. This Arabidopsis thaliana (Mouse-ear cress) protein is ATP-dependent Clp protease proteolytic subunit 5, chloroplastic.